The primary structure comprises 322 residues: Mitochondrial glutamate carrier 1 (322 aa).

Solcar repeat units follow at residues 6–93 (ISLP…FRYQ), 101–214 (LTLF…LNEL), and 223–312 (SPFY…GIAE). Helical transmembrane passes span 12 to 32 (LINGGIAGLIGVTCVFPIDLA), 62 to 82 (YFGMYRGAAVNLTLVTPEKAI), 107 to 127 (MLAGCGAGTCQVIVTTPMEML), 189 to 209 (GLGATLLRDVPFSIVYFPLFA), 223 to 243 (SPFYVSFLAGCVAGSAAAVAV), and 292 to 312 (ALVIAPLFGIAQVVYFLGIAE).

Belongs to the mitochondrial carrier (TC 2.A.29) family.

It is found in the mitochondrion inner membrane. It catalyses the reaction L-glutamate(in) + H(+)(in) = L-glutamate(out) + H(+)(out). Its function is as follows. Mitochondrial glutamate/H(+) symporter. Responsible for the transport of glutamate from the cytosol into the mitochondrial matrix with the concomitant import of a proton. Plays a role in the control of glucose-stimulated insulin secretion. The protein is Mitochondrial glutamate carrier 1 (SLC25A22) of Bos taurus (Bovine).